The sequence spans 341 residues: Glycerol-3-phosphate dehydrogenase [NAD(P)+] (341 aa).

Residues Ser-14, Phe-15, Arg-35, and Lys-108 each contribute to the NADPH site. Residues Lys-108 and Gly-136 each contribute to the sn-glycerol 3-phosphate site. Ala-140 is a binding site for NADPH. Residues Lys-191, Asp-244, Ser-254, Arg-255, and Asn-256 each contribute to the sn-glycerol 3-phosphate site. Residue Lys-191 is the Proton acceptor of the active site. An NADPH-binding site is contributed by Arg-255. Val-279 and Glu-281 together coordinate NADPH.

The protein belongs to the NAD-dependent glycerol-3-phosphate dehydrogenase family.

The protein localises to the cytoplasm. The enzyme catalyses sn-glycerol 3-phosphate + NAD(+) = dihydroxyacetone phosphate + NADH + H(+). It carries out the reaction sn-glycerol 3-phosphate + NADP(+) = dihydroxyacetone phosphate + NADPH + H(+). It participates in membrane lipid metabolism; glycerophospholipid metabolism. Its function is as follows. Catalyzes the reduction of the glycolytic intermediate dihydroxyacetone phosphate (DHAP) to sn-glycerol 3-phosphate (G3P), the key precursor for phospholipid synthesis. This chain is Glycerol-3-phosphate dehydrogenase [NAD(P)+], found in Pseudomonas syringae pv. tomato (strain ATCC BAA-871 / DC3000).